The chain runs to 1166 residues: Tectonin beta-propeller repeat-containing protein 1 (1166 aa).

TECPR repeat units follow at residues 209 to 240 (LSVW…SLVE), 254 to 285 (DLIW…SMVE), 301 to 332 (SVVW…IEMV), and 344 to 376 (DQVW…KAIV). Residues Ser-386, Ser-388, Ser-391, Ser-413, and Ser-418 each carry the phosphoserine modification. A disordered region spans residues 404 to 496 (RGSGTESAPS…PAELPWTNID (93 aa)). Over residues 407–416 (GTESAPSDTD) the composition is skewed to polar residues. Over residues 451 to 462 (TSGNTDHSTENA) the composition is skewed to polar residues. Residues 466–481 (EGKEKAPETSRSDECR) show a composition bias toward basic and acidic residues. Residues 616 to 722 (KTGALQWWCD…WLALLSLSCC (107 aa)) enclose the PH domain. One copy of the TECPR 5 repeat lies at 734–761 (QAIWSVTCKGDIFVSEPSPDLEARERLL). A Phosphoserine modification is found at Ser-943. TECPR repeat units lie at residues 958 to 989 (VALW…LHVG), 1003 to 1034 (YQVW…YHIP), 1049 to 1080 (TSVY…EHVS), and 1092 to 1132 (DQVW…DYGI).

This sequence belongs to the TECPR1 family. Interacts with ATG5; the interaction is direct. Interacts with WIPI2. Interacts with the ATG5-ATG12 conjugate, the interaction is however mutually exclusive with ATG16, since it does not interact with ATG12-ATG5-ATG16 complex.

The protein resides in the cytoplasmic vesicle. It localises to the autophagosome membrane. Its subcellular location is the lysosome membrane. Tethering factor involved in autophagy. Involved in autophagosome maturation by promoting the autophagosome fusion with lysosomes: acts by associating with both the ATG5-ATG12 conjugate and phosphatidylinositol-3-phosphate (PtdIns(3)P) present at the surface of autophagosomes. Also involved in selective autophagy against bacterial pathogens, by being required for phagophore/preautophagosomal structure biogenesis and maturation. In Mus musculus (Mouse), this protein is Tectonin beta-propeller repeat-containing protein 1 (Tecpr1).